A 408-amino-acid polypeptide reads, in one-letter code: Zinc finger and SCAN domain-containing protein 1 (408 aa).

The interval methionine 1–threonine 34 is disordered. The region spanning arginine 38–cysteine 120 is the SCAN box domain. Disordered stretches follow at residues tryptophan 136–glutamine 155, leucine 177–serine 203, and aspartate 215–glutamine 273. Over residues leucine 177–histidine 187 the composition is skewed to polar residues. C2H2-type zinc fingers lie at residues phenylalanine 292–histidine 314 and phenylalanine 320–histidine 342. Positions leucine 344 to proline 379 are disordered. The segment at phenylalanine 380–histidine 402 adopts a C2H2-type 3 zinc-finger fold.

The protein resides in the nucleus. May be involved in transcriptional regulation. The chain is Zinc finger and SCAN domain-containing protein 1 (ZSCAN1) from Homo sapiens (Human).